The following is a 284-amino-acid chain: Deoxyribonuclease-1 (284 aa).

The signal sequence occupies residues 1–22 (MRAARLMGALLALAGLLQLALS). Residue Asn40 is glycosylated (N-linked (GlcNAc...) asparagine). Residue Glu100 is part of the active site. An intrachain disulfide couples Cys123 to Cys126. The N-linked (GlcNAc...) asparagine glycan is linked to Asn128. His156 is a catalytic residue. The cysteines at positions 195 and 231 are disulfide-linked.

Belongs to the DNase I family. Ca(2+) serves as cofactor. The cofactor is Mg(2+).

It localises to the secreted. Its subcellular location is the zymogen granule. It is found in the nucleus envelope. The enzyme catalyses Endonucleolytic cleavage to 5'-phosphodinucleotide and 5'-phosphooligonucleotide end-products.. In terms of biological role, serum endocuclease secreted into body fluids by a wide variety of exocrine and endocrine organs. Expressed by non-hematopoietic tissues and preferentially cleaves protein-free DNA. Among other functions, seems to be involved in cell death by apoptosis. Binds specifically to G-actin and blocks actin polymerization. Together with DNASE1L3, plays a key role in degrading neutrophil extracellular traps (NETs). NETs are mainly composed of DNA fibers and are released by neutrophils to bind pathogens during inflammation. Degradation of intravascular NETs by DNASE1 and DNASE1L3 is required to prevent formation of clots that obstruct blood vessels and cause organ damage following inflammation. This chain is Deoxyribonuclease-1 (DNASE1), found in Sus scrofa (Pig).